The chain runs to 306 residues: MEALNTNVDLAGLEGRSVLVTGGASGIGLATAKAWAAAGAYVTLADIQPIEKGEKIASDLSHNGQHVNYTFCDVTSWESQLEAFRSAVKFSPRQTLDIVATFAGTAFAPGNEVDHVLFAGEPSLDAELPAPNTKNIEVNLTGVYYSSWLALYFFRLKPSDSSEPGDKSLILVSSIGGYMDSPKASTYPASKFGVRGLFRSTRARTIDIGVRCNLLAPWFVDTPLIAPVKNAMKARGIEMSKVLAFATMEDCVQAASFCAVNKELHGRALAIQPEGTFDLKDDVEDGWAGDQLRPIMKRRREAGFDA.

Positions 25, 27, 48, 52, and 73 each coordinate NADP(+). The active-site Proton donor is the S173. NADP(+)-binding residues include Y187, K191, V220, and T222. Catalysis depends on Y187, which acts as the Proton acceptor. K191 acts as the Lowers pKa of active site Tyr in catalysis.

This sequence belongs to the short-chain dehydrogenases/reductases (SDR) family. As to quaternary structure, homodimer.

The protein resides in the cytoplasm. It is found in the cytosol. The enzyme catalyses (1'S,5'S)-5'-hydroxyaverantin + NAD(+) = (S)-5'-oxoaverantin + NADH + H(+). The catalysed reaction is (1'S,5'R)-5'-hydroxyaverantin + NAD(+) = (S)-5'-oxoaverantin + NADH + 2 H(+). The protein operates within mycotoxin biosynthesis. Functionally, 5'-hydroxyaverantin dehydrogenase; part of the fragmented gene cluster that mediates the biosynthesis of dothistromin (DOTH), a polyketide toxin very similar in structure to the aflatoxin precursor, versicolorin B. The first step of the pathway is the conversion of acetate to norsolorinic acid (NOR) and requires the fatty acid synthase subunits hexA and hexB, as well as the polyketide synthase pksA. PksA combines a hexanoyl starter unit and 7 malonyl-CoA extender units to synthesize the precursor NOR. The hexanoyl starter unit is provided to the acyl-carrier protein (ACP) domain by the fungal fatty acid synthase hexA/hexB. The second step is the conversion of NOR to averantin (AVN) and requires the norsolorinic acid ketoreductase nor1, which catalyzes the dehydration of norsolorinic acid to form (1'S)-averantin. The cytochrome P450 monooxygenase avnA then catalyzes the hydroxylation of AVN to 5'hydroxyaverantin (HAVN). The next step is performed by adhA that transforms HAVN to averufin (AVF). Averufin might then be converted to hydroxyversicolorone by cypX and avfA. Hydroxyversicolorone is further converted versiconal hemiacetal acetate (VHA) by moxY. VHA is then the substrate for the versiconal hemiacetal acetate esterase est1 to yield versiconal (VAL). Versicolorin B synthase vbsA then converts VAL to versicolorin B (VERB) by closing the bisfuran ring. Then, the activity of the versicolorin B desaturase verB leads to versicolorin A (VERA). DotB, a predicted chloroperoxidase, may perform epoxidation of the A-ring of VERA. Alternatively, a cytochrome P450, such as cypX or avnA could catalyze this step. It is also possible that another, uncharacterized, cytochrome P450 enzyme is responsible for this step. Opening of the epoxide could potentially be achieved by the epoxide hydrolase epoA. However, epoA seems not to be required for DOTH biosynthesis, but other epoxide hydrolases may have the ability to complement this hydrolysis. Alternatively, opening of the epoxide ring could be achieved non-enzymatically. The next step is the deoxygenation of ring A to yield the 5,8-dihydroxyanthraquinone which is most likely catalyzed by the NADPH dehydrogenase encoded by ver1. The last stages of DOTH biosynthesis are proposed to involve hydroxylation of the bisfuran. OrdB and norB might have oxidative roles here. An alternative possibility is that cytochrome P450 monoogenases such as avnA and cypX might perform these steps in addition to previously proposed steps. The sequence is that of 5'-hydroxyaverantin dehydrogenase from Dothistroma septosporum (strain NZE10 / CBS 128990) (Red band needle blight fungus).